The sequence spans 211 residues: Methylthioribulose-1-phosphate dehydratase (211 aa).

Zn(2+)-binding residues include histidine 97 and histidine 99.

The protein belongs to the aldolase class II family. MtnB subfamily. In terms of assembly, homotetramer. It depends on Zn(2+) as a cofactor.

It carries out the reaction 5-(methylsulfanyl)-D-ribulose 1-phosphate = 5-methylsulfanyl-2,3-dioxopentyl phosphate + H2O. The protein operates within amino-acid biosynthesis; L-methionine biosynthesis via salvage pathway; L-methionine from S-methyl-5-thio-alpha-D-ribose 1-phosphate: step 2/6. Catalyzes the dehydration of methylthioribulose-1-phosphate (MTRu-1-P) into 2,3-diketo-5-methylthiopentyl-1-phosphate (DK-MTP-1-P). The sequence is that of Methylthioribulose-1-phosphate dehydratase from Geobacillus thermodenitrificans (strain NG80-2).